Consider the following 71-residue polypeptide: Metallothionein-like protein 1 (71 aa).

Belongs to the metallothionein superfamily. Type 15 family.

Functionally, metallothioneins have a high content of cysteine residues that bind various heavy metals. The protein is Metallothionein-like protein 1 (MT1) of Casuarina glauca (Swamp oak).